Reading from the N-terminus, the 721-residue chain is BRCA1-A complex subunit RAP80 (721 aa).

The segment at 1–65 (MPRRKKKGKE…GLQKTKIKQS (65 aa)) is disordered. Residues 1-101 (MPRRKKKGKE…SEQEAREVNS (101 aa)) form a necessary for transcriptional repression region. Residue Lys20 forms a Glycyl lysine isopeptide (Lys-Gly) (interchain with G-Cter in SUMO2) linkage. Ser29 is subject to Phosphoserine. A Glycyl lysine isopeptide (Lys-Gly) (interchain with G-Cter in SUMO2) cross-link involves residue Lys31. Residues Ser44 and Ser46 each carry the phosphoserine modification. Positions 60–78 (TKIKQSSRAKCLAKRKIAQ) match the LR motif motif. Glycyl lysine isopeptide (Lys-Gly) (interchain with G-Cter in SUMO2) cross-links involve residues Lys75 and Lys90. A UIM 1 domain is found at 80 to 99 (TEEEQFALALKMSEQEAREV). A disordered region spans residues 93 to 204 (EQEAREVNSQ…SVSSGSWDQS (112 aa)). Positions 97–103 (REVNSQE) are UIM-linker. The tract at residues 100-200 (NSQEEEEEEL…EEPVSVSSGS (101 aa)) is necessary for interaction with NR6A1 N-terminus. A Phosphoserine modification is found at Ser101. Residues 105-124 (EEEELLRKAIAESLNSCRPS) form the UIM 2 domain. Over residues 117 to 130 (SLNSCRPSDASATR) the composition is skewed to polar residues. Phosphoserine is present on Ser140. Positions 194–204 (VSVSSGSWDQS) are enriched in low complexity. The residue at position 205 (Ser205) is a Phosphoserine. Lys245 is covalently cross-linked (Glycyl lysine isopeptide (Lys-Gly) (interchain with G-Cter in SUMO2)). Residues 270-400 (TGGTVNYFWG…EEEPTTSHGQ (131 aa)) are AIR. The interval 334–369 (NECGQGEQASEKNEGISEDMGDEDKEERQESRASVW) is disordered. Acidic residues predominate over residues 349–358 (ISEDMGDEDK). Residues Lys382 and Lys387 each participate in a glycyl lysine isopeptide (Lys-Gly) (interchain with G-Cter in SUMO2) cross-link. The disordered stretch occupies residues 391 to 418 (EEEPTTSHGQSSQGLFVEETSEEGNSVP). The interval 400–500 (QSSQGLFVEE…EIHTSTFSSS (101 aa)) is necessary for interaction with NR6A1 C-terminus. A phosphoserine mark is found at Ser402 and Ser420. Lys429 is covalently cross-linked (Glycyl lysine isopeptide (Lys-Gly) (interchain with G-Cter in SUMO2)). Residue Ser467 is modified to Phosphoserine. The UBZ4-type zinc finger occupies 502–529 (QVSCPLCDQGFPPTKIERHAMYCNGLMG). Zn(2+) contacts are provided by Cys505, Cys508, His520, and Cys524. The segment at 505–582 (CPLCDQGFPP…REYQCHVESC (78 aa)) is zinc-finger-like region. Residues Lys544, Lys559, Lys562, and Lys607 each participate in a glycyl lysine isopeptide (Lys-Gly) (interchain with G-Cter in SUMO2) cross-link. Phosphoserine is present on Ser627. Residues Lys635 and Lys642 each participate in a glycyl lysine isopeptide (Lys-Gly) (interchain with G-Cter in SUMO2) cross-link. Phosphoserine occurs at positions 655 and 679. Glycyl lysine isopeptide (Lys-Gly) (interchain with G-Cter in SUMO2) cross-links involve residues Lys698 and Lys699.

It belongs to the RAP80 family. As to quaternary structure, component of the ARISC complex, at least composed of UIMC1/RAP80, ABRAXAS1, BRCC3/BRCC36, BABAM2 and BABAM1/NBA1. Component of the BRCA1-A complex, at least composed of the BRCA1, BARD1, UIMC1/RAP80, ABRAXAS1, BRCC3/BRCC36, BABAM2 and BABAM1/NBA1. In the BRCA1-A complex, interacts directly with ABRAXAS1. Interacts with UBE2I. Interacts with NR6A1. Interacts with ESR1. Interacts with TSP57. Interacts with TRAIP. Post-translationally, sumoylated. Phosphorylated upon DNA damage by ATM or ATR.

Its subcellular location is the nucleus. In terms of biological role, ubiquitin-binding protein. Specifically recognizes and binds 'Lys-63'-linked ubiquitin. Plays a central role in the BRCA1-A complex by specifically binding 'Lys-63'-linked ubiquitinated histones H2A and H2AX at DNA lesions sites, leading to target the BRCA1-BARD1 heterodimer to sites of DNA damage at double-strand breaks (DSBs). The BRCA1-A complex also possesses deubiquitinase activity that specifically removes 'Lys-63'-linked ubiquitin on histones H2A and H2AX. Also weakly binds monoubiquitin but with much less affinity than 'Lys-63'-linked ubiquitin. May interact with monoubiquitinated histones H2A and H2B; the relevance of such results is however unclear in vivo. Does not bind Lys-48'-linked ubiquitin. May indirectly act as a transcriptional repressor by inhibiting the interaction of NR6A1 with the corepressor NCOR1. This Sus scrofa (Pig) protein is BRCA1-A complex subunit RAP80 (UIMC1).